Consider the following 1463-residue polypeptide: DNA polymerase III PolC-type (1463 aa).

An Exonuclease domain is found at 425 to 581 (YVVFDVETTG…YDAEATGRLL (157 aa)).

Belongs to the DNA polymerase type-C family. PolC subfamily.

Its subcellular location is the cytoplasm. It catalyses the reaction DNA(n) + a 2'-deoxyribonucleoside 5'-triphosphate = DNA(n+1) + diphosphate. Its function is as follows. Required for replicative DNA synthesis. This DNA polymerase also exhibits 3' to 5' exonuclease activity. The sequence is that of DNA polymerase III PolC-type from Streptococcus pneumoniae serotype 2 (strain D39 / NCTC 7466).